Reading from the N-terminus, the 320-residue chain is o-succinylbenzoate synthase (320 aa).

The active-site Proton donor is Lys133. Positions 161, 190, and 213 each coordinate Mg(2+). The Proton acceptor role is filled by Lys235.

It belongs to the mandelate racemase/muconate lactonizing enzyme family. MenC type 1 subfamily. Requires a divalent metal cation as cofactor.

It carries out the reaction (1R,6R)-6-hydroxy-2-succinyl-cyclohexa-2,4-diene-1-carboxylate = 2-succinylbenzoate + H2O. The protein operates within quinol/quinone metabolism; 1,4-dihydroxy-2-naphthoate biosynthesis; 1,4-dihydroxy-2-naphthoate from chorismate: step 4/7. Its pathway is quinol/quinone metabolism; menaquinone biosynthesis. Converts 2-succinyl-6-hydroxy-2,4-cyclohexadiene-1-carboxylate (SHCHC) to 2-succinylbenzoate (OSB). The sequence is that of o-succinylbenzoate synthase from Shigella boydii serotype 18 (strain CDC 3083-94 / BS512).